A 396-amino-acid chain; its full sequence is Putative N(4)-(beta-N-acetylglucosaminyl)-L-asparaginase GG24090 (396 aa).

The N-terminal stretch at 1-23 (MKRHLGTCLWVLCLASTAFSSLA) is a signal peptide. 2 cysteine pairs are disulfide-bonded: Cys100-Cys105 and Cys199-Cys215. Thr246 serves as the catalytic Nucleophile. Substrate is bound by residues 274 to 277 (RVGD) and 297 to 300 (TGDG). The cysteines at positions 357 and 384 are disulfide-linked.

Belongs to the Ntn-hydrolase family. In terms of assembly, heterotetramer of two alpha and two beta chains arranged as a dimer of alpha/beta heterodimers. Cleaved into an alpha and beta chain by autocatalysis; this activates the enzyme. The N-terminal residue of the beta subunit is responsible for the nucleophile hydrolase activity.

The catalysed reaction is N(4)-(beta-N-acetyl-D-glucosaminyl)-L-asparagine + H2O = N-acetyl-beta-D-glucosaminylamine + L-aspartate + H(+). In terms of biological role, cleaves the GlcNAc-Asn bond which joins oligosaccharides to the peptide of asparagine-linked glycoproteins. The protein is Putative N(4)-(beta-N-acetylglucosaminyl)-L-asparaginase GG24090 of Drosophila erecta (Fruit fly).